The sequence spans 656 residues: UvrABC system protein C (656 aa).

The GIY-YIG domain maps to 41 to 120 (KSSGCYLFKD…IKTNKPYFNI (80 aa)). Residues 230-265 (DDLEVFLERKMNQYSNDLEFENAAKIRDQISGLKLL) form the UVR domain.

It belongs to the UvrC family. Interacts with UvrB in an incision complex.

Its subcellular location is the cytoplasm. The UvrABC repair system catalyzes the recognition and processing of DNA lesions. UvrC both incises the 5' and 3' sides of the lesion. The N-terminal half is responsible for the 3' incision and the C-terminal half is responsible for the 5' incision. The sequence is that of UvrABC system protein C from Prochlorococcus marinus subsp. pastoris (strain CCMP1986 / NIES-2087 / MED4).